A 165-amino-acid polypeptide reads, in one-letter code: 2-C-methyl-D-erythritol 2,4-cyclodiphosphate synthase (165 aa).

A divalent metal cation contacts are provided by Asp-13 and His-15. Residues 13 to 15 and 39 to 40 each bind 4-CDP-2-C-methyl-D-erythritol 2-phosphate; these read DRH and HS. Residue His-47 coordinates a divalent metal cation. Residues 61–63 and Phe-141 each bind 4-CDP-2-C-methyl-D-erythritol 2-phosphate; that span reads DIG.

This sequence belongs to the IspF family. Homotrimer. It depends on a divalent metal cation as a cofactor.

It catalyses the reaction 4-CDP-2-C-methyl-D-erythritol 2-phosphate = 2-C-methyl-D-erythritol 2,4-cyclic diphosphate + CMP. The protein operates within isoprenoid biosynthesis; isopentenyl diphosphate biosynthesis via DXP pathway; isopentenyl diphosphate from 1-deoxy-D-xylulose 5-phosphate: step 4/6. Functionally, involved in the biosynthesis of isopentenyl diphosphate (IPP) and dimethylallyl diphosphate (DMAPP), two major building blocks of isoprenoid compounds. Catalyzes the conversion of 4-diphosphocytidyl-2-C-methyl-D-erythritol 2-phosphate (CDP-ME2P) to 2-C-methyl-D-erythritol 2,4-cyclodiphosphate (ME-CPP) with a corresponding release of cytidine 5-monophosphate (CMP). This chain is 2-C-methyl-D-erythritol 2,4-cyclodiphosphate synthase, found in Thermotoga neapolitana (strain ATCC 49049 / DSM 4359 / NBRC 107923 / NS-E).